The sequence spans 632 residues: tRNA uridine 5-carboxymethylaminomethyl modification enzyme MnmG (632 aa).

13–18 (GGGHAG) provides a ligand contact to FAD. 273 to 287 (GPRYCPSIEDKIHRF) contacts NAD(+).

It belongs to the MnmG family. Homodimer. Heterotetramer of two MnmE and two MnmG subunits. FAD is required as a cofactor.

The protein resides in the cytoplasm. Its function is as follows. NAD-binding protein involved in the addition of a carboxymethylaminomethyl (cmnm) group at the wobble position (U34) of certain tRNAs, forming tRNA-cmnm(5)s(2)U34. This is tRNA uridine 5-carboxymethylaminomethyl modification enzyme MnmG from Psychrobacter arcticus (strain DSM 17307 / VKM B-2377 / 273-4).